Reading from the N-terminus, the 262-residue chain is Acyl-[acyl-carrier-protein]--UDP-N-acetylglucosamine O-acyltransferase (262 aa).

This sequence belongs to the transferase hexapeptide repeat family. LpxA subfamily. As to quaternary structure, homotrimer.

It is found in the cytoplasm. It catalyses the reaction a (3R)-hydroxyacyl-[ACP] + UDP-N-acetyl-alpha-D-glucosamine = a UDP-3-O-[(3R)-3-hydroxyacyl]-N-acetyl-alpha-D-glucosamine + holo-[ACP]. The protein operates within glycolipid biosynthesis; lipid IV(A) biosynthesis; lipid IV(A) from (3R)-3-hydroxytetradecanoyl-[acyl-carrier-protein] and UDP-N-acetyl-alpha-D-glucosamine: step 1/6. Its function is as follows. Involved in the biosynthesis of lipid A, a phosphorylated glycolipid that anchors the lipopolysaccharide to the outer membrane of the cell. The protein is Acyl-[acyl-carrier-protein]--UDP-N-acetylglucosamine O-acyltransferase of Burkholderia mallei (strain NCTC 10247).